Here is a 129-residue protein sequence, read N- to C-terminus: Replication initiation control protein YabA (129 aa).

The Zn(2+) site is built by histidine 103, cysteine 105, cysteine 119, and cysteine 122.

The protein belongs to the YabA family. As to quaternary structure, homotetramer. Interacts with both DnaA and DnaN, acting as a bridge between these two proteins. It depends on Zn(2+) as a cofactor.

The protein resides in the cytoplasm. Its subcellular location is the nucleoid. Its function is as follows. Involved in control of chromosome replication initiation. Inhibits the cooperative binding of DnaA to the oriC region, thus negatively regulating initiation of chromosome replication. Inhibits the ability of DnaA-ATP to form a helix on DNA; does not disassemble preformed DnaA-DNA helices. Decreases the residence time of DnaA on the chromosome at its binding sites (oriC, replication forks and promoter-binding sites). Tethers DnaA to the replication machinery via the DNA polymerase beta sliding clamp subunit (dnaN). Associates with oriC and other DnaA targets on the chromosome in a DnaA-dependent manner. This chain is Replication initiation control protein YabA, found in Listeria monocytogenes serotype 4b (strain CLIP80459).